The sequence spans 213 residues: Protein MobE (213 aa).

This chain is Protein MobE (mobE), found in Acidithiobacillus ferrooxidans (Thiobacillus ferrooxidans).